We begin with the raw amino-acid sequence, 392 residues long: Heat-inducible transcription repressor HrcA (392 aa).

This sequence belongs to the HrcA family.

Negative regulator of class I heat shock genes (grpE-dnaK-dnaJ and groELS operons). Prevents heat-shock induction of these operons. The sequence is that of Heat-inducible transcription repressor HrcA from Chlamydia trachomatis serovar D (strain ATCC VR-885 / DSM 19411 / UW-3/Cx).